The following is a 244-amino-acid chain: Derlin-2.1 (244 aa).

The Cytoplasmic segment spans residues 1–21; the sequence is MAQAVEEWYKQMPIITRSYLT. The helical transmembrane segment at 22-42 threads the bilayer; the sequence is AAVVTTVGCSLEIISPYNLYL. At 43 to 96 the chain is on the lumenal side; that stretch reads NPTLVVKQYQFWRLVTNFLYFRKMDLDFLFHMFFLARYCKLLEENSFRGKTADF. Residues 97–117 form a helical membrane-spanning segment; sequence LYMLLFGATVLTGIVLIGGMI. Topologically, residues 118–121 are cytoplasmic; sequence PYLS. Residues 122–142 form a helical membrane-spanning segment; that stretch reads VSFSKIIFLSNSLTFMMVYVW. Residues 143 to 152 lie on the Lumenal side of the membrane; that stretch reads SKQNPYIHMS. A helical transmembrane segment spans residues 153 to 173; it reads FLGLFTFTAAYLPWVLLGFSI. At 174–244 the chain is on the cytoplasmic side; the sequence is LVGASAWGDF…HAPFDEIHQD (71 aa).

It belongs to the derlin family.

It localises to the endoplasmic reticulum membrane. Its function is as follows. May be involved in the degradation process of specific misfolded endoplasmic reticulum (ER) luminal proteins. The polypeptide is Derlin-2.1 (DER2.1) (Arabidopsis thaliana (Mouse-ear cress)).